The chain runs to 277 residues: Probable endonuclease 4 (277 aa).

Residues His67, His107, Glu141, Asp173, His176, His210, Asp223, His225, and Glu255 each contribute to the Zn(2+) site.

It belongs to the AP endonuclease 2 family. Zn(2+) is required as a cofactor.

The enzyme catalyses Endonucleolytic cleavage to 5'-phosphooligonucleotide end-products.. In terms of biological role, endonuclease IV plays a role in DNA repair. It cleaves phosphodiester bonds at apurinic or apyrimidinic (AP) sites, generating a 3'-hydroxyl group and a 5'-terminal sugar phosphate. The protein is Probable endonuclease 4 of Haloarcula marismortui (strain ATCC 43049 / DSM 3752 / JCM 8966 / VKM B-1809) (Halobacterium marismortui).